A 335-amino-acid polypeptide reads, in one-letter code: Dihydroorotate dehydrogenase (quinone) (335 aa).

Residues 59-63 (AGLDK) and Thr83 contribute to the FMN site. Residue Lys63 coordinates substrate. Residue 108–112 (NRMGF) coordinates substrate. The FMN site is built by Asn136 and Asn169. Asn169 serves as a coordination point for substrate. Ser172 (nucleophile) is an active-site residue. Asn174 contributes to the substrate binding site. Lys214 and Thr242 together coordinate FMN. Substrate is bound at residue 243-244 (NT). FMN is bound by residues Gly265, Gly294, and 315–316 (YS).

The protein belongs to the dihydroorotate dehydrogenase family. Type 2 subfamily. In terms of assembly, monomer. FMN is required as a cofactor.

The protein resides in the cell membrane. The catalysed reaction is (S)-dihydroorotate + a quinone = orotate + a quinol. The protein operates within pyrimidine metabolism; UMP biosynthesis via de novo pathway; orotate from (S)-dihydroorotate (quinone route): step 1/1. Its function is as follows. Catalyzes the conversion of dihydroorotate to orotate with quinone as electron acceptor. The protein is Dihydroorotate dehydrogenase (quinone) of Neisseria gonorrhoeae (strain ATCC 700825 / FA 1090).